Consider the following 323-residue polypeptide: MSDRILCKFFVHGSCLKGENCEFSHDSKDPPNNVCTFYQKRICLYGSRCRYDHVRAASNLPLSSDSESLDRSISTTPSRHLQQQGDNNDGDKSSNVYCIHPREYPICSFAAAGDCPRGNQCPHMHGDLCNTCGKKCLHPFRPEEREEHTKECEKKQKHIEALKQSQDIECSVCLDRILSKATPGERKFGLLTECDHPFCIQCIRNWRSSAPVSGMDVNSTLRACPICRKLSYFVVPSVVWYSSPEEKKEIIDIYKAKLRSIDCKHFNFGNGNCPFGASCFYKHAYSDGHLEEVVLRHLGSQEGETVITDSIRLSEFLGGLQIF.

C3H1-type zinc fingers lie at residues Met1–Lys28 and Asp29–Ala56. The segment covering Leu62–Ser74 has biased composition (low complexity). The tract at residues Leu62–Lys92 is disordered. A compositionally biased stretch (polar residues) spans Thr75–Asn87. The C3H1-type 3 zinc finger occupies Pro101 to Leu128. Positions Cys129–His158 are makorin-type Cys-His. An RING-type zinc finger spans residues Cys170–Arg228. The segment at Lys257–Ser286 adopts a C3H1-type 4 zinc-finger fold.

The enzyme catalyses S-ubiquitinyl-[E2 ubiquitin-conjugating enzyme]-L-cysteine + [acceptor protein]-L-lysine = [E2 ubiquitin-conjugating enzyme]-L-cysteine + N(6)-ubiquitinyl-[acceptor protein]-L-lysine.. The protein operates within protein modification; protein ubiquitination. E3 ubiquitin ligase catalyzing the covalent attachment of ubiquitin moieties onto substrate proteins. This is E3 ubiquitin-protein ligase makorin (MKRN) from Arabidopsis thaliana (Mouse-ear cress).